A 92-amino-acid polypeptide reads, in one-letter code: Small ribosomal subunit protein bS18B (92 aa).

This sequence belongs to the bacterial ribosomal protein bS18 family. As to quaternary structure, part of the 30S ribosomal subunit. Forms a tight heterodimer with protein bS6.

Binds as a heterodimer with protein bS6 to the central domain of the 16S rRNA, where it helps stabilize the platform of the 30S subunit. The sequence is that of Small ribosomal subunit protein bS18B from Cupriavidus pinatubonensis (strain JMP 134 / LMG 1197) (Cupriavidus necator (strain JMP 134)).